The chain runs to 405 residues: Acetylornithine/succinyldiaminopimelate aminotransferase (405 aa).

Pyridoxal 5'-phosphate contacts are provided by residues 108 to 109 (GT) and phenylalanine 141. Arginine 144 lines the N(2)-acetyl-L-ornithine pocket. Position 226–229 (226–229 (DEVQ)) interacts with pyridoxal 5'-phosphate. An N6-(pyridoxal phosphate)lysine modification is found at lysine 255. Serine 283 is a binding site for N(2)-acetyl-L-ornithine. Threonine 284 lines the pyridoxal 5'-phosphate pocket.

The protein belongs to the class-III pyridoxal-phosphate-dependent aminotransferase family. ArgD subfamily. As to quaternary structure, homodimer. The cofactor is pyridoxal 5'-phosphate.

It localises to the cytoplasm. The enzyme catalyses N(2)-acetyl-L-ornithine + 2-oxoglutarate = N-acetyl-L-glutamate 5-semialdehyde + L-glutamate. It catalyses the reaction N-succinyl-(2S,6S)-2,6-diaminopimelate + 2-oxoglutarate = (S)-2-succinylamino-6-oxoheptanedioate + L-glutamate. The protein operates within amino-acid biosynthesis; L-arginine biosynthesis; N(2)-acetyl-L-ornithine from L-glutamate: step 4/4. It functions in the pathway amino-acid biosynthesis; L-lysine biosynthesis via DAP pathway; LL-2,6-diaminopimelate from (S)-tetrahydrodipicolinate (succinylase route): step 2/3. Its activity is regulated as follows. Inhibited by gabaculine (Gcn). In terms of biological role, involved in both the arginine and lysine biosynthetic pathways. This Salmonella typhimurium (strain LT2 / SGSC1412 / ATCC 700720) protein is Acetylornithine/succinyldiaminopimelate aminotransferase.